The sequence spans 174 residues: Large ribosomal subunit protein uL5 (174 aa).

Belongs to the universal ribosomal protein uL5 family. As to quaternary structure, part of the 50S ribosomal subunit; contacts the 5S rRNA and probably tRNA. Forms a bridge to the 30S subunit in the 70S ribosome.

This is one of the proteins that bind and probably mediate the attachment of the 5S RNA into the large ribosomal subunit, where it forms part of the central protuberance. In the 70S ribosome it contacts protein S13 of the 30S subunit (bridge B1b), connecting the 2 subunits; this bridge is implicated in subunit movement. May contact the P site tRNA; the 5S rRNA and some of its associated proteins might help stabilize positioning of ribosome-bound tRNAs. The protein is Large ribosomal subunit protein uL5 of Halorubrum lacusprofundi (strain ATCC 49239 / DSM 5036 / JCM 8891 / ACAM 34).